Consider the following 337-residue polypeptide: Nucleoid-associated protein HS_0228 (337 aa).

It belongs to the YejK family.

It localises to the cytoplasm. The protein localises to the nucleoid. The polypeptide is Nucleoid-associated protein HS_0228 (Histophilus somni (strain 129Pt) (Haemophilus somnus)).